The primary structure comprises 364 residues: DNA primase large subunit PriL (364 aa).

[4Fe-4S] cluster is bound by residues C237, C309, C318, and C325. Positions 345–364 (MQNDNEKGHEEKKEGETPPQ) are disordered.

It belongs to the eukaryotic-type primase large subunit family. In terms of assembly, heterodimer of a small subunit (PriS) and a large subunit (PriL). [4Fe-4S] cluster is required as a cofactor.

Regulatory subunit of DNA primase, an RNA polymerase that catalyzes the synthesis of short RNA molecules used as primers for DNA polymerase during DNA replication. Stabilizes and modulates the activity of the small subunit, increasing the rate of DNA synthesis, and conferring RNA synthesis capability. The DNA polymerase activity may enable DNA primase to also catalyze primer extension after primer synthesis. May also play a role in DNA repair. In Methanococcoides burtonii (strain DSM 6242 / NBRC 107633 / OCM 468 / ACE-M), this protein is DNA primase large subunit PriL.